The chain runs to 530 residues: Ubiquitin carboxyl-terminal hydrolase 17-like protein 12 (530 aa).

A USP domain is found at 80–375 (AGLQNMGNTC…QAYVLFYIQK (296 aa)). Cys-89 (nucleophile) is an active-site residue. His-334 (proton acceptor) is an active-site residue. Basic and acidic residues-rich tracts occupy residues 382-392 (SESVSRGREPR) and 398-412 (DTDR…KRDH). Disordered regions lie at residues 382-412 (SESV…KRDH) and 477-530 (NHHP…LVCQ). A compositionally biased stretch (low complexity) spans 484–495 (SSLLKLSSTTPT). Residues 496-505 (HQESMNTGTL) show a composition bias toward polar residues. The segment covering 510 to 524 (GRARRSKGKNKHSKR) has biased composition (basic residues).

Belongs to the peptidase C19 family. USP17 subfamily.

It localises to the nucleus. The protein resides in the endoplasmic reticulum. The enzyme catalyses Thiol-dependent hydrolysis of ester, thioester, amide, peptide and isopeptide bonds formed by the C-terminal Gly of ubiquitin (a 76-residue protein attached to proteins as an intracellular targeting signal).. Its function is as follows. Deubiquitinating enzyme that removes conjugated ubiquitin from specific proteins to regulate different cellular processes that may include cell proliferation, progression through the cell cycle, apoptosis, cell migration, and the cellular response to viral infection. The sequence is that of Ubiquitin carboxyl-terminal hydrolase 17-like protein 12 (USP17L12) from Homo sapiens (Human).